The sequence spans 607 residues: Replication protein E1 (607 aa).

The Nuclear localization signal motif lies at 81–83 (KRK). Ser-87 and Ser-95 each carry phosphoserine; by host. Positions 94 to 103 (LSPRLQSLNL) match the Nuclear export signal motif. Positions 147–310 (QGGVGLGHIE…TMIQHQTADS (164 aa)) are DNA-binding region. Residues 409 to 559 (LNFIVFLDKF…FPFDSDDKPL (151 aa)) form the SF3 helicase domain. ATP is bound at residue 435–442 (GPPDTGKS). A Glycyl lysine isopeptide (Lys-Gly) (interchain with G-Cter in SUMO) cross-link involves residue Lys-516. The disordered stretch occupies residues 583–607 (QEDEGEDGSTQRTFQCTTRQVNGPV). Residues 590–607 (GSTQRTFQCTTRQVNGPV) are compositionally biased toward polar residues.

Belongs to the papillomaviridae E1 protein family. In terms of assembly, can form hexamers. Interacts with E2 protein; this interaction increases E1 DNA binding specificity. Interacts with host DNA polymerase subunit POLA2. Interacts with host single stranded DNA-binding protein RPA1. Interacts with host TOP1; this interaction stimulates the enzymatic activity of TOP1. In terms of processing, phosphorylated. Sumoylated.

Its subcellular location is the host nucleus. It carries out the reaction Couples ATP hydrolysis with the unwinding of duplex DNA by translocating in the 3'-5' direction.. The catalysed reaction is ATP + H2O = ADP + phosphate + H(+). Its function is as follows. ATP-dependent DNA 3'-5' helicase required for initiation of viral DNA replication. It forms a complex with the viral E2 protein. The E1-E2 complex binds to the replication origin which contains binding sites for both proteins. During the initial step, a dimer of E1 interacts with a dimer of protein E2 leading to a complex that binds the viral origin of replication with high specificity. Then, a second dimer of E1 displaces the E2 dimer in an ATP-dependent manner to form the E1 tetramer. Following this, two E1 monomers are added to each half of the site, which results in the formation of two E1 trimers on the viral ori. Subsequently, two hexamers will be created. The double hexamer acts as a bi-directional helicase machinery and unwinds the viral DNA and then recruits the host DNA polymerase to start replication. This chain is Replication protein E1, found in Human papillomavirus 23.